Here is a 763-residue protein sequence, read N- to C-terminus: Phosphoglycerol transferase I (763 aa).

The next 4 membrane-spanning stretches (helical) occupy residues 4 to 19 (LLSF…IYAW), 26 to 48 (WWFA…LFAS), 76 to 98 (YILP…GWIL), and 105 to 127 (PHHF…ASPA).

This sequence belongs to the OpgB family.

It is found in the cell inner membrane. The enzyme catalyses a phosphatidylglycerol + a membrane-derived-oligosaccharide D-glucose = a 1,2-diacyl-sn-glycerol + a membrane-derived-oligosaccharide 6-(glycerophospho)-D-glucose.. The protein operates within glycan metabolism; osmoregulated periplasmic glucan (OPG) biosynthesis. Transfers a phosphoglycerol residue from phosphatidylglycerol to the membrane-bound nascent glucan backbones. This chain is Phosphoglycerol transferase I, found in Escherichia coli O157:H7.